Here is a 119-residue protein sequence, read N- to C-terminus: NADH dehydrogenase [ubiquinone] 1 subunit C2 (119 aa).

A helical membrane pass occupies residues 56 to 75 (GLHRQLLYITAFFFAGYYLV).

This sequence belongs to the complex I NDUFC2 subunit family. As to quaternary structure, complex I is composed of 45 different subunits. Interacts with TMEM242.

It is found in the mitochondrion inner membrane. Functionally, accessory subunit of the mitochondrial membrane respiratory chain NADH dehydrogenase (Complex I), that is believed not to be involved in catalysis but required for the complex assembly. Complex I functions in the transfer of electrons from NADH to the respiratory chain. The immediate electron acceptor for the enzyme is believed to be ubiquinone. The polypeptide is NADH dehydrogenase [ubiquinone] 1 subunit C2 (Pan troglodytes (Chimpanzee)).